The chain runs to 77 residues: Large ribosomal subunit protein bL28 (77 aa).

Belongs to the bacterial ribosomal protein bL28 family.

In Cupriavidus necator (strain ATCC 17699 / DSM 428 / KCTC 22496 / NCIMB 10442 / H16 / Stanier 337) (Ralstonia eutropha), this protein is Large ribosomal subunit protein bL28.